A 268-amino-acid polypeptide reads, in one-letter code: MTLLNVCGLSHHYAHGGFSGKHQHQAVLNNVSLTLKSGETVALLGRSGCGKSTLARLLVGLESPSQGNISWRGESLAKLNRAQRKAFRRDIQMVFQDSISAVNPRKTVREILREPMRHLLSLKKSEQLARASEMLKAVDLDDSVLDKRPPQLSGGQLQLVCLARALAVEPKLLILDEAVSNLDLVLQAGVIRLLKKLQQQFGTACLFITHDLRLVERFCQRVMVMDNGQIAETQAVGDKLTFSSDAGRVLQNAVLPAFPVRRRTSEKV.

In terms of domain architecture, ABC transporter spans 4–252; the sequence is LNVCGLSHHY…SSDAGRVLQN (249 aa). 45-52 is an ATP binding site; that stretch reads GRSGCGKS.

Belongs to the ABC transporter superfamily. Nickel importer (TC 3.A.1.5.3) family. In terms of assembly, the complex is composed of two ATP-binding proteins (NikD and NikE), two transmembrane proteins (NikB and NikC) and a solute-binding protein (NikA).

Its subcellular location is the cell inner membrane. It catalyses the reaction Ni(2+)(out) + ATP + H2O = Ni(2+)(in) + ADP + phosphate + H(+). Part of the ABC transporter complex NikABCDE involved in nickel import. Responsible for energy coupling to the transport system. The polypeptide is Nickel import ATP-binding protein NikE (Shigella flexneri serotype 5b (strain 8401)).